The following is a 1947-amino-acid chain: DNA-directed RNA polymerase subunit beta' (1947 aa).

Residues Cys-119, Cys-121, Cys-141, and Cys-144 each contribute to the Zn(2+) site. Mg(2+) is bound by residues Asp-1778, Asp-1780, and Asp-1782.

It belongs to the RNA polymerase beta' chain family. RpoC1 subfamily. As to quaternary structure, in plastids the minimal PEP RNA polymerase catalytic core is composed of four subunits: alpha, beta, beta', and beta''. When a (nuclear-encoded) sigma factor is associated with the core the holoenzyme is formed, which can initiate transcription. Requires Mg(2+) as cofactor. Zn(2+) serves as cofactor.

The protein resides in the plastid. The protein localises to the chloroplast. It carries out the reaction RNA(n) + a ribonucleoside 5'-triphosphate = RNA(n+1) + diphosphate. Its function is as follows. DNA-dependent RNA polymerase catalyzes the transcription of DNA into RNA using the four ribonucleoside triphosphates as substrates. This chain is DNA-directed RNA polymerase subunit beta', found in Oedogonium cardiacum (Filamentous green alga).